A 267-amino-acid polypeptide reads, in one-letter code: Ubiquinone biosynthesis protein COQ4 homolog, mitochondrial (267 aa).

Residues His170, Asp171, His174, and Glu186 each contribute to the Zn(2+) site.

It belongs to the COQ4 family. In terms of assembly, component of a multi-subunit COQ enzyme complex. Zn(2+) serves as cofactor.

The protein resides in the mitochondrion inner membrane. The catalysed reaction is a 4-hydroxy-3-methoxy-5-(all-trans-polyprenyl)benzoate + H(+) = a 2-methoxy-6-(all-trans-polyprenyl)phenol + CO2. The protein operates within cofactor biosynthesis; ubiquinone biosynthesis. In terms of biological role, lyase that catalyzes the C1-decarboxylation of 4-hydroxy-3-methoxy-5-(all-trans-polyprenyl)benzoic acid into 2-methoxy-6-(all-trans-polyprenyl)phenol during ubiquinone biosynthesis. In Drosophila pseudoobscura pseudoobscura (Fruit fly), this protein is Ubiquinone biosynthesis protein COQ4 homolog, mitochondrial.